The sequence spans 212 residues: Ribosome maturation factor RimP (212 aa).

This sequence belongs to the RimP family.

It is found in the cytoplasm. Functionally, required for maturation of 30S ribosomal subunits. This Variovorax paradoxus (strain S110) protein is Ribosome maturation factor RimP.